The chain runs to 293 residues: Elongation factor Ts (293 aa).

The segment at 80 to 83 (TDFV) is involved in Mg(2+) ion dislocation from EF-Tu.

The protein belongs to the EF-Ts family.

It localises to the cytoplasm. Its function is as follows. Associates with the EF-Tu.GDP complex and induces the exchange of GDP to GTP. It remains bound to the aminoacyl-tRNA.EF-Tu.GTP complex up to the GTP hydrolysis stage on the ribosome. The polypeptide is Elongation factor Ts (Burkholderia multivorans (strain ATCC 17616 / 249)).